A 135-amino-acid polypeptide reads, in one-letter code: Transcription antitermination protein NusB (135 aa).

Belongs to the NusB family.

Its function is as follows. Involved in transcription antitermination. Required for transcription of ribosomal RNA (rRNA) genes. Binds specifically to the boxA antiterminator sequence of the ribosomal RNA (rrn) operons. This Lacticaseibacillus casei (strain BL23) (Lactobacillus casei) protein is Transcription antitermination protein NusB.